Reading from the N-terminus, the 545-residue chain is CTP synthase (545 aa).

The interval 1-265 (MSKYIFVTGG…DDLVVQNLGL (265 aa)) is amidoligase domain. Ser-13 contacts CTP. UTP is bound at residue Ser-13. Residues 14–19 (SLGKGA) and Asp-71 each bind ATP. The Mg(2+) site is built by Asp-71 and Glu-139. Residues 146 to 148 (DIE), 186 to 191 (KTKPTQ), and Lys-222 contribute to the CTP site. Residues 186 to 191 (KTKPTQ) and Lys-222 contribute to the UTP site. The region spanning 290–541 (VIALVGKYVG…MRAAIAQRER (252 aa)) is the Glutamine amidotransferase type-1 domain. Gly-351 is an L-glutamine binding site. The active-site Nucleophile; for glutamine hydrolysis is Cys-378. L-glutamine contacts are provided by residues 379 to 382 (LGMQ), Glu-402, and Arg-469. Active-site residues include His-514 and Glu-516.

This sequence belongs to the CTP synthase family. As to quaternary structure, homotetramer.

The catalysed reaction is UTP + L-glutamine + ATP + H2O = CTP + L-glutamate + ADP + phosphate + 2 H(+). The enzyme catalyses L-glutamine + H2O = L-glutamate + NH4(+). It carries out the reaction UTP + NH4(+) + ATP = CTP + ADP + phosphate + 2 H(+). It participates in pyrimidine metabolism; CTP biosynthesis via de novo pathway; CTP from UDP: step 2/2. Its activity is regulated as follows. Allosterically activated by GTP, when glutamine is the substrate; GTP has no effect on the reaction when ammonia is the substrate. The allosteric effector GTP functions by stabilizing the protein conformation that binds the tetrahedral intermediate(s) formed during glutamine hydrolysis. Inhibited by the product CTP, via allosteric rather than competitive inhibition. Catalyzes the ATP-dependent amination of UTP to CTP with either L-glutamine or ammonia as the source of nitrogen. Regulates intracellular CTP levels through interactions with the four ribonucleotide triphosphates. In Acidithiobacillus ferrooxidans (strain ATCC 23270 / DSM 14882 / CIP 104768 / NCIMB 8455) (Ferrobacillus ferrooxidans (strain ATCC 23270)), this protein is CTP synthase.